The following is a 425-amino-acid chain: Serine--tRNA ligase 2 (425 aa).

234–236 lines the L-serine pocket; that stretch reads TAE. Position 265-267 (265-267) interacts with ATP; sequence RVE. Glu288 is a binding site for L-serine. ATP is bound at residue 352–355; it reads EVSS. Residue Ser388 coordinates L-serine.

Belongs to the class-II aminoacyl-tRNA synthetase family. Type-1 seryl-tRNA synthetase subfamily. Homodimer. The tRNA molecule binds across the dimer.

The protein localises to the cytoplasm. The enzyme catalyses tRNA(Ser) + L-serine + ATP = L-seryl-tRNA(Ser) + AMP + diphosphate + H(+). The catalysed reaction is tRNA(Sec) + L-serine + ATP = L-seryl-tRNA(Sec) + AMP + diphosphate + H(+). The protein operates within aminoacyl-tRNA biosynthesis; selenocysteinyl-tRNA(Sec) biosynthesis; L-seryl-tRNA(Sec) from L-serine and tRNA(Sec): step 1/1. Its function is as follows. Catalyzes the attachment of serine to tRNA(Ser). Is also able to aminoacylate tRNA(Sec) with serine, to form the misacylated tRNA L-seryl-tRNA(Sec), which will be further converted into selenocysteinyl-tRNA(Sec). The polypeptide is Serine--tRNA ligase 2 (Clostridium acetobutylicum (strain ATCC 824 / DSM 792 / JCM 1419 / IAM 19013 / LMG 5710 / NBRC 13948 / NRRL B-527 / VKM B-1787 / 2291 / W)).